A 199-amino-acid chain; its full sequence is Glycerol-3-phosphate acyltransferase (199 aa).

A run of 5 helical transmembrane segments spans residues 3 to 23, 50 to 70, 77 to 97, 110 to 130, and 136 to 156; these read YILIGLISYFCGAIPFSYLLP, VIGFICMVLDGVKAFVPVLVF, IHYTGISSIFAVLGHDFPVFL, GVFFALCPICGFTFLATWISI, and YVSLASIVGMYAASFVAFFFN.

This sequence belongs to the PlsY family. In terms of assembly, probably interacts with PlsX.

Its subcellular location is the cell inner membrane. The enzyme catalyses an acyl phosphate + sn-glycerol 3-phosphate = a 1-acyl-sn-glycero-3-phosphate + phosphate. It participates in lipid metabolism; phospholipid metabolism. Functionally, catalyzes the transfer of an acyl group from acyl-phosphate (acyl-PO(4)) to glycerol-3-phosphate (G3P) to form lysophosphatidic acid (LPA). This enzyme utilizes acyl-phosphate as fatty acyl donor, but not acyl-CoA or acyl-ACP. The protein is Glycerol-3-phosphate acyltransferase of Pseudothermotoga lettingae (strain ATCC BAA-301 / DSM 14385 / NBRC 107922 / TMO) (Thermotoga lettingae).